The sequence spans 1108 residues: Mediator of RNA polymerase II transcription subunit 14 (1108 aa).

Disordered regions lie at residues 1-30 (MAAV…GGDT), 35-54 (SSEI…DNPL), and 1048-1108 (QQQR…VDLT). The segment covering 35 to 52 (SSEIVQQQTPARSLQSDN) has biased composition (polar residues). A compositionally biased stretch (low complexity) spans 1048-1080 (QQQRQPVVQPGQQPQVQNQANGVMNRGPQRPGL).

The protein belongs to the Mediator complex subunit 14 family. Component of the Mediator complex.

It localises to the nucleus. Component of the Mediator complex, a coactivator involved in the regulated transcription of nearly all RNA polymerase II-dependent genes. Mediator functions as a bridge to convey information from gene-specific regulatory proteins to the basal RNA polymerase II transcription machinery. Mediator is recruited to promoters by direct interactions with regulatory proteins and serves as a scaffold for the assembly of a functional preinitiation complex with RNA polymerase II and the general transcription factors. In Pyricularia oryzae (strain 70-15 / ATCC MYA-4617 / FGSC 8958) (Rice blast fungus), this protein is Mediator of RNA polymerase II transcription subunit 14 (RGR1).